An 88-amino-acid polypeptide reads, in one-letter code: Period circadian protein (88 aa).

Residues 23–88 (VTNTSIAGTG…VTLTESLLNK (66 aa)) form a disordered region. A run of 16 repeats spans residues 30-31 (GT), 33-34 (GT), 35-36 (GT), 37-38 (GT), 39-40 (GT), 41-42 (GT), 43-44 (GT), 45-46 (GT), 47-48 (GT), 49-50 (GT), 51-52 (GT), 53-54 (GT), 55-56 (GT), 57-58 (GT), 59-60 (GT), and 61-62 (GN). The segment at 30–62 (GTGGTGTGTGTGTGTGTGTGTGTGTGTGTGTGN) is 16 X 2 AA tandem repeats of G-[TN]. Positions 30–62 (GTGGTGTGTGTGTGTGTGTGTGTGTGTGTGTGN) are enriched in gly residues. Residues 79–88 (VTLTESLLNK) show a composition bias toward polar residues.

Forms a heterodimer with timeless (TIM); the complex then translocates into the nucleus. Post-translationally, phosphorylated with a circadian rhythmicity, probably by the double-time protein (dbt). Phosphorylation could be implicated in the stability of per monomer and in the formation of heterodimer per-tim.

The protein resides in the nucleus. It is found in the cytoplasm. Its subcellular location is the perinuclear region. Functionally, essential for biological clock functions. Determines the period length of circadian and ultradian rhythms; an increase in PER dosage leads to shortened circadian rhythms and a decrease leads to lengthened circadian rhythms. Essential for the circadian rhythmicity of locomotor activity, eclosion behavior, and for the rhythmic component of the male courtship song that originates in the thoracic nervous system. The biological cycle depends on the rhythmic formation and nuclear localization of the TIM-PER complex. Light induces the degradation of TIM, which promotes elimination of PER. Nuclear activity of the heterodimer coordinatively regulates PER and TIM transcription through a negative feedback loop. Behaves as a negative element in circadian transcriptional loop. Does not appear to bind DNA, suggesting indirect transcriptional inhibition. The sequence is that of Period circadian protein (per) from Drosophila teissieri (Fruit fly).